The following is a 544-amino-acid chain: Chaperonin GroEL 1 (544 aa).

ATP is bound by residues 29 to 32 (TLGP), K50, 86 to 90 (DGTTT), G414, and D494.

This sequence belongs to the chaperonin (HSP60) family. As to quaternary structure, forms a cylinder of 14 subunits composed of two heptameric rings stacked back-to-back. Interacts with the co-chaperonin GroES.

Its subcellular location is the cytoplasm. It catalyses the reaction ATP + H2O + a folded polypeptide = ADP + phosphate + an unfolded polypeptide.. Functionally, together with its co-chaperonin GroES, plays an essential role in assisting protein folding. The GroEL-GroES system forms a nano-cage that allows encapsulation of the non-native substrate proteins and provides a physical environment optimized to promote and accelerate protein folding. This chain is Chaperonin GroEL 1, found in Psychromonas ingrahamii (strain DSM 17664 / CCUG 51855 / 37).